The sequence spans 474 residues: Alkylcitrate dehydratase phiI (474 aa).

The protein belongs to the PrpD family. In terms of assembly, monomer.

The catalysed reaction is (4E,11E)-2-hydroxytrideca-4,11-dien-1,2,3-tricarboxylate + 2 H(+) = [4-(deca-1,8-diyl)-2,5-dioxo-2,5-dihydro-3-furanyl]acetate + 2 H2O. It participates in secondary metabolite biosynthesis. In terms of biological role, alkylcitrate dehydratasee; part of the gene cluster that mediates the biosynthesis of the antihypercholesterolemic agents phomoidrides which are dimeric anhydrides. Within the pathway, the alkylcitrate synthase (ACS) tstiJ and the alkylcitrate dehydratase (ACDH) tstI produce the decarboxylated monomeric anhydrides by coupling the C12-fatty acyl product from phiA with oxalacetic acid. The pathway begins with the highly reducing polyketide synthase tstA that catalyzes the formation of a C12-fatty acyl-ACP, starting from one acetate and 5 malonate units. The hydrolase tstM is involved in the release of the C12-fatty acyl chain from phiA. The alkylcitrate synthase (ACS) tstJ and the alkylcitrate dehydratase (ACDH) tstI then give rise to decarboxylated monomeric anhydrides by coupling the C12-fatty acyl chain with oxalacetic acid. The cyclase tstC is responsible for the dimerization of the monomeric anhydrides which leads to the production of prephomoidride that contains the characteristic bicyclo[4.3.1]deca-1,6-diene system of phomoidrides. Iterative oxidation catalyzed by the alpha-ketoglutarate-dependent dioxygenase tstK produced then phomoidride A. Finally, the methyltransferase tstE converts phomoidride A to phomoidride B via an acetalization reaction. The phosphatidylethanolamine-binding protein tstB and tstN are not essential for dimerization and their functions have still to be determined. This is Alkylcitrate dehydratase phiI from Talaromyces stipitatus (strain ATCC 10500 / CBS 375.48 / QM 6759 / NRRL 1006) (Penicillium stipitatum).